The chain runs to 191 residues: Small ribosomal subunit protein eS7y (191 aa).

An N-acetylmethionine modification is found at Met-1. Residues 17–50 (TEFEEQVTQALFDLENTNQELKSELKDLYINQAV) adopt a coiled-coil conformation.

This sequence belongs to the eukaryotic ribosomal protein eS7 family.

The sequence is that of Small ribosomal subunit protein eS7y (RPS7B) from Arabidopsis thaliana (Mouse-ear cress).